A 165-amino-acid polypeptide reads, in one-letter code: uncharacterized protein (165 aa).

A helical transmembrane segment spans residues 16 to 36 (ASISSILNFFFFYIMEYFVAV).

The protein belongs to the asfivirus F165R family.

It is found in the host membrane. This is an uncharacterized protein from Ornithodoros (relapsing fever ticks).